Reading from the N-terminus, the 466-residue chain is MPHSYDYDAIVIGSGPGGEGAAMGLVKQGARVAVIERYQNVGGGCTHWGTIPSKALRHAVSRIIEFNQNPLYSDHSRLLRSSFADILNHADNVINQQTRMRQGFYERNHCEILQGNARFVDEHTLALDCPDGSVETLTAEKFVIACGSRPYHPTDVDFTHPRIYDSNSILSMHHEPRHVLIYGAGVIGCEYASIFRGMDVKVDLINTRDRLLAFLDQEMSDSLSYHFWNSGVVIRHNEEYEKIEGCDDGVIMHLKSGKKLKADCLLYANGRTGNTDSLALQNIGLETDSRGQLKVNSMYQTAQPHVYAVGDVIGYPSLASAAYDQGRIAAQALVKGEANAHLIEDIPTGIYTIPEISSVGKTEQQLTAMKVPYEVGRAQFKHLARAQIVGMNVGTLKILFHRETKEILGIHCFGERAAEIIHIGQAIMEQKGGGNTIEYFVNTTFNYPTMAEAYRVAALNGLNRLF.

FAD is bound at residue 36-45 (ERYQNVGGGC).

This sequence belongs to the class-I pyridine nucleotide-disulfide oxidoreductase family. FAD serves as cofactor.

It is found in the cytoplasm. The enzyme catalyses NAD(+) + NADPH = NADH + NADP(+). Functionally, conversion of NADPH, generated by peripheral catabolic pathways, to NADH, which can enter the respiratory chain for energy generation. The sequence is that of Soluble pyridine nucleotide transhydrogenase from Escherichia coli O81 (strain ED1a).